A 165-amino-acid chain; its full sequence is MDPVNFIKTYAPRGSIIFINYTMSLTSHLNPSIEKHVGIYYGTLLSEHLVVESTYRKGVQIVPLDSFFEGYLSAKVYMLENIQVMKIAADTSLTLLGIPYGFGHNRMYCFKLVAECYKNAGINTSSKRILGKDIFLSQNFTDDNRWIKIYDSNNLTFWQIDYLKG.

It belongs to the orthopoxvirus OPG091 family.

Its subcellular location is the virion. It localises to the host cytoplasm. Its function is as follows. Contributes to virulence in host but not to replication in cell culture. This chain is Protein OPG091 (OPG091), found in Variola virus (isolate Human/India/Ind3/1967) (VARV).